The sequence spans 241 residues: Glutathione S-transferase omega-1 (241 aa).

Ser2 bears the N-acetylserine mark. In terms of domain architecture, GST N-terminal spans 22–101 (GSIRIYSMRF…YLDEAYPGKK (80 aa)). Cys32 (nucleophile) is an active-site residue. Position 57 is an N6-acetyllysine (Lys57). Glutathione contacts are provided by residues Lys59, Val72, and 85 to 86 (ES). In terms of domain architecture, GST C-terminal spans 106–230 (DPYEKACQKM…DWQGFLELYL (125 aa)). Ser129 is modified (phosphoserine). Residues Lys143, Lys148, and Lys152 each carry the N6-acetyllysine modification.

Belongs to the GST superfamily. Omega family. In terms of assembly, homodimer. Ubiquitous. Highest expression in liver, pancreas, skeletal muscle, spleen, thymus, colon, blood leukocyte and heart. Lowest expression in brain, placenta and lung.

It is found in the cytoplasm. The protein localises to the cytosol. The enzyme catalyses RX + glutathione = an S-substituted glutathione + a halide anion + H(+). It catalyses the reaction L-dehydroascorbate + 2 glutathione = glutathione disulfide + L-ascorbate. It carries out the reaction methylarsonate + 2 glutathione + H(+) = methylarsonous acid + glutathione disulfide + H2O. With respect to regulation, monomethylarsonic acid reductase activity is competitively inhibited by 1-chloro 2,4-dinitrobenzene (CDNB) and by deoxycholate. In terms of biological role, exhibits glutathione-dependent thiol transferase and dehydroascorbate reductase activities. Has S-(phenacyl)glutathione reductase activity. Also has glutathione S-transferase activity. Participates in the biotransformation of inorganic arsenic and reduces monomethylarsonic acid (MMA) and dimethylarsonic acid. This Homo sapiens (Human) protein is Glutathione S-transferase omega-1 (GSTO1).